Here is a 417-residue protein sequence, read N- to C-terminus: Serine hydroxymethyltransferase (417 aa).

(6S)-5,6,7,8-tetrahydrofolate contacts are provided by residues Leu-112 and 116 to 118; that span reads GHL. Lys-221 carries the N6-(pyridoxal phosphate)lysine modification. Glu-247 is a binding site for (6S)-5,6,7,8-tetrahydrofolate.

It belongs to the SHMT family. As to quaternary structure, homodimer. Requires pyridoxal 5'-phosphate as cofactor.

The protein localises to the cytoplasm. The catalysed reaction is (6R)-5,10-methylene-5,6,7,8-tetrahydrofolate + glycine + H2O = (6S)-5,6,7,8-tetrahydrofolate + L-serine. It functions in the pathway one-carbon metabolism; tetrahydrofolate interconversion. Its pathway is amino-acid biosynthesis; glycine biosynthesis; glycine from L-serine: step 1/1. Its function is as follows. Catalyzes the reversible interconversion of serine and glycine with tetrahydrofolate (THF) serving as the one-carbon carrier. This reaction serves as the major source of one-carbon groups required for the biosynthesis of purines, thymidylate, methionine, and other important biomolecules. Also exhibits THF-independent aldolase activity toward beta-hydroxyamino acids, producing glycine and aldehydes, via a retro-aldol mechanism. This chain is Serine hydroxymethyltransferase, found in Borrelia hermsii (strain HS1 / DAH).